The chain runs to 40 residues: Photosystem II reaction center protein J (40 aa).

A helical membrane pass occupies residues 8 to 28; that stretch reads IPLWVIGTVAGILVIGIIGIF.

The protein belongs to the PsbJ family. In terms of assembly, PSII is composed of 1 copy each of membrane proteins PsbA, PsbB, PsbC, PsbD, PsbE, PsbF, PsbH, PsbI, PsbJ, PsbK, PsbL, PsbM, PsbT, PsbX, PsbY, PsbZ, Psb30/Ycf12, at least 3 peripheral proteins of the oxygen-evolving complex and a large number of cofactors. It forms dimeric complexes.

The protein resides in the plastid. The protein localises to the chloroplast thylakoid membrane. Its function is as follows. One of the components of the core complex of photosystem II (PSII). PSII is a light-driven water:plastoquinone oxidoreductase that uses light energy to abstract electrons from H(2)O, generating O(2) and a proton gradient subsequently used for ATP formation. It consists of a core antenna complex that captures photons, and an electron transfer chain that converts photonic excitation into a charge separation. The polypeptide is Photosystem II reaction center protein J (Lobularia maritima (Sweet alyssum)).